The primary structure comprises 251 residues: Metallo-beta-lactamase domain-containing protein 1 (251 aa).

Zn(2+) is bound by residues H118, H120, D122, H123, H173, D196, and H235.

It belongs to the metallo-beta-lactamase superfamily. Glyoxalase II family. Homodimer. It depends on Zn(2+) as a cofactor.

The protein resides in the cytoplasm. Its subcellular location is the cytosol. The protein localises to the nucleus. It catalyses the reaction a ribonucleotidyl-ribonucleotide-RNA + H2O = a 3'-end ribonucleotide-RNA + a 5'-end 5'-phospho-ribonucleoside-RNA + H(+). In terms of biological role, endoribonuclease that catalyzes the hydrolysis of histone-coding pre-mRNA 3'-end. Involved in histone pre-mRNA processing during the S-phase of the cell cycle, which is required for entering/progressing through S-phase. Cleaves histone pre-mRNA at a major and a minor cleavage site after the 5'-ACCCA-3' and the 5'-ACCCACA-3' sequence, respectively, and located downstream of the stem-loop. May require the presence of the HDE element located at the histone pre-RNA 3'-end to avoid non-specific cleavage. This Rattus norvegicus (Rat) protein is Metallo-beta-lactamase domain-containing protein 1 (Mblac1).